A 231-amino-acid polypeptide reads, in one-letter code: Probable calcium-binding protein CML21 (231 aa).

EF-hand domains lie at 54 to 89, 90 to 125, 145 to 180, and 181 to 216; these read DGLR…LEIS, FDEE…VYLL, PTFE…SGER, and SSGR…WVGI. Residues aspartate 67, aspartate 69, asparagine 71, serine 73, and glutamate 78 each coordinate Ca(2+). Positions 158, 160, 162, 164, 169, 194, 196, 198, 200, and 205 each coordinate Ca(2+).

In terms of biological role, potential calcium sensor. The sequence is that of Probable calcium-binding protein CML21 (CML21) from Arabidopsis thaliana (Mouse-ear cress).